The chain runs to 707 residues: Prolyl endopeptidase-like (707 aa).

Catalysis depends on charge relay system residues serine 538, aspartate 624, and histidine 670.

Belongs to the peptidase S9A family. In terms of assembly, homodimer.

The protein localises to the cytoplasm. The protein resides in the cytosol. Functionally, serine peptidase whose precise substrate specificity remains unclear. Does not cleave peptides after a arginine or lysine residue. Regulates trans-Golgi network morphology and sorting by regulating the membrane binding of the AP-1 complex. May play a role in the regulation of synaptic vesicle exocytosis. This is Prolyl endopeptidase-like (prepl) from Xenopus laevis (African clawed frog).